A 1081-amino-acid polypeptide reads, in one-letter code: MPRRKQQAPRRAAAYVSDELKAAALVEDDVEPEEQAADGEPSAKYMCPEKELSKACPSYQNSPAAEFSSHEMDSESHISETSDRMADFESSSIKNEEETKEVQVPLEDTTVSDSLEQMKAVYNNFLSNSYWSNLNLNLHQPSSENNGGSSSSSSSSSSSCGSGSFDWHQSAMAKTLQQVSQNRMLPEPSLFSTVQLYRQSSKLYGSIFTGASKFRCKDCSAAYDTLVELTVHMNETGHYRDDNHETDNNNPKRWSKPRKRSLLEMEGKEDAQKVLKCMYCGHSFESLQDLSVHMIKTKHYQKVPLKEPVTPVAAKIIPAARKKPSLELELPSSPDSTGGTPKATLSDASDALQKNSNPYITPNNRYGHQNGASYAWHFEARKSQILKCMECGSSHDTLQELTAHMMVTGHFIKVTNSAMKKGKPIMETPVTPTITTLLDEKVQSVPLAATTFTSPSNTPASVSPKLAVEIKKEVDKEKAVPDEKPKEREKPSEEEEKYDISSKYHYLTENDLEESPKGGLDILKSLENTVTSAINKAQNGTPSWGGYPSIHAAYQLPNMMKLSLGSSGKSTPLKPMFGNSEIVSPTKTQTLVSPPSSQTSPMPKTNFHAMEELVKKVTEKVAKVEEKMKEPEGKLSPPKRATPSPCSSEQSEPIKMEASSDGSFKSQENSPSPPRDACKEASPSAEPVENGKELVKPLSGGLSGSTAIITDHPPEQPFVNPLSALQSVMNIHLGKAAKPSLPALDPMSMLFKMSNSLAEKAAVATPPPLQAKKAEHLDRYFYHVNNDQPIDLTKGKSDKGCSLGSGLLSPTSTSPATSSSTVTTAKTSAVVSFMSNSPLRENALSDISDMLKNLTESHTSKSSTPSSISEKSDIDGATLEEAEESTPAQKRKGRQSNWNPQHLLILQAQFAASLRQTSEGKYIMSDLSPQERMHISRFTGLSMTTISHWLANVKYQLRRTGGTKFLKNLDTGHPVFFCNDCASQIRTPSTYISHLESHLGFRLRDLSKLSTEQINNQIAQTKSPSEKLVTSSPEEDLGTTYQCKLCNRTFASKHAVKLHLSKTHGKSPEDHLLFVSELEKQ.

3 disordered regions span residues 25–104 (LVED…EVQV), 141–161 (PSSE…SSCG), and 238–257 (HYRD…WSKP). Residues 26–37 (VEDDVEPEEQAA) are compositionally biased toward acidic residues. Positions 68-87 (SSHEMDSESHISETSDRMAD) are enriched in basic and acidic residues. C2H2-type zinc fingers lie at residues 214–238 (FRCK…ETGH) and 275–299 (LKCM…KTKH). A compositionally biased stretch (basic and acidic residues) spans 238–247 (HYRDDNHETD). Residues 325-346 (SLELELPSSPDSTGGTPKATLS) are disordered. The segment at 387-410 (KCMECGSSHDTLQELTAHMMVTGH) adopts a C2H2-type 3; atypical zinc-finger fold. Basic and acidic residues predominate over residues 474 to 491 (VDKEKAVPDEKPKEREKP). Disordered regions lie at residues 474 to 499 (VDKE…EKYD), 626 to 699 (EKMK…KPLS), 792 to 824 (LTKG…TVTT), and 855 to 897 (TESH…RQSN). Residues 606–630 (NFHAMEELVKKVTEKVAKVEEKMKE) are a coiled coil. Over residues 660–670 (SDGSFKSQENS) the composition is skewed to polar residues. A Phosphoserine modification is found at serine 682. Composition is skewed to low complexity over residues 800–824 (GCSL…TVTT) and 856–869 (ESHT…SSIS). A DNA-binding region (homeobox; atypical) is located at residues 891-961 (RKGRQSNWNP…NVKYQLRRTG (71 aa)). 2 C2H2-type zinc fingers span residues 976 to 998 (FFCN…LESH) and 1041 to 1064 (YQCK…SKTH).

It belongs to the teashirt C2H2-type zinc-finger protein family. In terms of assembly, interacts (via N-terminus) with HDAC1 and HDAC2; the interaction is direct. Found in a trimeric complex with APBB1 and HDAC1; the interaction between HDAC1 and APBB1 is mediated by TSHZ3. Interacts (via homeobox domain) with APBB1 (via PID domain 1). Expressed in corticostriatal neurons.

It localises to the nucleus. Its subcellular location is the cell projection. It is found in the growth cone. Functionally, transcriptional regulator involved in developmental processes. Functions in association with APBB1, SET and HDAC factors as a transcriptional repressor, that inhibits the expression of CASP4. TSHZ3-mediated transcription repression involves the recruitment of histone deacetylases HDAC1 and HDAC2. Associates with chromatin in a region surrounding the CASP4 transcriptional start site(s). Regulates the development of neurons involved in both respiratory rhythm and airflow control. Promotes maintenance of nucleus ambiguus (nA) motoneurons, which govern upper airway function, and establishes a respiratory rhythm generator (RRG) activity compatible with survival at birth. Involved in the differentiation of the proximal uretic smooth muscle cells during developmental processes. Involved in the up-regulation of myocardin, that directs the expression of smooth muscle cells in the proximal ureter. Involved in the modulation of glutamatergic synaptic transmission and long-term synaptic potentiation. The sequence is that of Teashirt homolog 3 (Tshz3) from Mus musculus (Mouse).